A 623-amino-acid chain; its full sequence is Chaperone protein HtpG (623 aa).

The tract at residues M1–R336 is a; substrate-binding. A b region spans residues E337–R550. The c stretch occupies residues I551 to S623.

The protein belongs to the heat shock protein 90 family. In terms of assembly, homodimer.

It is found in the cytoplasm. Functionally, molecular chaperone. Has ATPase activity. This chain is Chaperone protein HtpG, found in Legionella pneumophila (strain Lens).